Here is a 320-residue protein sequence, read N- to C-terminus: Nicotianamine synthase 3 (320 aa).

It belongs to the nicotianamine synthase (NAS)-like family. In shoots.

The enzyme catalyses 3 S-adenosyl-L-methionine = nicotianamine + 3 S-methyl-5'-thioadenosine + 3 H(+). Its function is as follows. Synthesizes nicotianamine, a polyamine which serves as a sensor for the physiological iron status within the plant, and/or might be involved in the transport of iron. The polypeptide is Nicotianamine synthase 3 (NAS3) (Arabidopsis thaliana (Mouse-ear cress)).